The sequence spans 549 residues: Fumarate hydratase 1, mitochondrial (549 aa).

Cysteine 114 lines the [4Fe-4S] cluster pocket. (S)-malate-binding positions include 115–116 (QD), arginine 154, glycine 197, and 200–206 (NKSFLLQ). The [4Fe-4S] cluster site is built by cysteine 233 and cysteine 328. (S)-malate-binding positions include arginine 404, 450–454 (TTAGR), and lysine 474.

This sequence belongs to the class-I fumarase family. In terms of assembly, homodimer. [4Fe-4S] cluster serves as cofactor.

It localises to the mitochondrion. The enzyme catalyses (S)-malate = fumarate + H2O. Its pathway is carbohydrate metabolism; tricarboxylic acid cycle; (S)-malate from fumarate: step 1/1. With respect to regulation, specifically and competitively inhibited by 2-thiomalate, which coordinates with the catalytic [4Fe-4S] cluster. Catalyzes the reversible hydration of fumarate to (S)-malate. Catalyzes the hydration of fumarate to L-malate in the tricarboxylic acid (TCA) cycle to facilitate a transition step in the production of energy in the form of NADH. This is Fumarate hydratase 1, mitochondrial from Leishmania major.